The sequence spans 557 residues: Cytochrome P450 734A2 (557 aa).

A helical membrane pass occupies residues 13 to 35 (WATWRVAAVAAAAAVWVTMHVAA). Residue C495 coordinates heme.

The protein belongs to the cytochrome P450 family. Heme serves as cofactor. Expressed in roots, shoot apex, leaf sheaths and leaf blades.

The protein resides in the membrane. Functionally, cytochrome P450 involved in brassinosteroids (BRs) inactivation and regulation of BRs homeostasis. Is a multifunctional and multisubstrate enzyme that controls the endogenous bioactive BR content both by direct inactivation of castasterone (CS) and by decreasing the levels of BR precursors. Catalyzes the oxidation of carbon 22 hydroxylated BR intermediates to produce C26 oxidized metabolites. The sequence is that of Cytochrome P450 734A2 (CYP734A2) from Oryza sativa subsp. japonica (Rice).